A 439-amino-acid polypeptide reads, in one-letter code: GTPase Obg (439 aa).

In terms of domain architecture, Obg spans 5–164; that stretch reads TDFFDQATIV…LTLELELKML (160 aa). An OBG-type G domain is found at 165-335; it reads ADVGLVGFPN…LLQRVAELLR (171 aa). Residues 171 to 178, 196 to 200, 217 to 220, 287 to 290, and 316 to 318 each bind GTP; these read GFPNAGKS, FTTLT, DIPG, NKAD, and SAA. Mg(2+) is bound by residues Ser178 and Thr198. Positions 337-359 are disordered; it reads DPPPQRDPVDPDEPPLEWPLPPV. In terms of domain architecture, OCT spans 356 to 433; it reads LPPVDENAFT…IGRAELVWDD (78 aa).

Belongs to the TRAFAC class OBG-HflX-like GTPase superfamily. OBG GTPase family. In terms of assembly, monomer. The cofactor is Mg(2+).

Its subcellular location is the cytoplasm. Functionally, an essential GTPase which binds GTP, GDP and possibly (p)ppGpp with moderate affinity, with high nucleotide exchange rates and a fairly low GTP hydrolysis rate. Plays a role in control of the cell cycle, stress response, ribosome biogenesis and in those bacteria that undergo differentiation, in morphogenesis control. The protein is GTPase Obg of Chloroflexus aggregans (strain MD-66 / DSM 9485).